A 437-amino-acid polypeptide reads, in one-letter code: ATP-dependent RNA helicase RhlB (437 aa).

The short motif at 9–37 is the Q motif element; that stretch reads QKFADLGLKPQVTEGLEKKGFEYCTPIQA. In terms of domain architecture, Helicase ATP-binding spans 40–219; it reads LPVLLTGQDI…FEHMHNPEHV (180 aa). 53–60 lines the ATP pocket; it reads AQTGTGKT. Positions 165-168 match the DEAD box motif; that stretch reads DEAD. Residues 245–390 form the Helicase C-terminal domain; it reads ALLQTLIEEE…VSDYDASALI (146 aa). The tract at residues 395–437 is disordered; it reads APLRMRAPRTQQRRTNTGGTRSGNRKPQGRRPRQPRQSAPKQS. The span at 403-413 shows a compositional bias: low complexity; it reads RTQQRRTNTGG. Residues 417 to 428 are compositionally biased toward basic residues; the sequence is GNRKPQGRRPRQ.

The protein belongs to the DEAD box helicase family. RhlB subfamily. Component of the RNA degradosome, which is a multiprotein complex involved in RNA processing and mRNA degradation.

It is found in the cytoplasm. The enzyme catalyses ATP + H2O = ADP + phosphate + H(+). In terms of biological role, DEAD-box RNA helicase involved in RNA degradation. Has RNA-dependent ATPase activity and unwinds double-stranded RNA. The chain is ATP-dependent RNA helicase RhlB from Vibrio campbellii (strain ATCC BAA-1116).